A 513-amino-acid chain; its full sequence is Bifunctional purine biosynthesis protein PurH (513 aa).

Positions 1 to 145 constitute an MGS-like domain; that stretch reads MTKKAIISVY…KNFKYITVII (145 aa).

Belongs to the PurH family.

The catalysed reaction is (6R)-10-formyltetrahydrofolate + 5-amino-1-(5-phospho-beta-D-ribosyl)imidazole-4-carboxamide = 5-formamido-1-(5-phospho-D-ribosyl)imidazole-4-carboxamide + (6S)-5,6,7,8-tetrahydrofolate. The enzyme catalyses IMP + H2O = 5-formamido-1-(5-phospho-D-ribosyl)imidazole-4-carboxamide. It functions in the pathway purine metabolism; IMP biosynthesis via de novo pathway; 5-formamido-1-(5-phospho-D-ribosyl)imidazole-4-carboxamide from 5-amino-1-(5-phospho-D-ribosyl)imidazole-4-carboxamide (10-formyl THF route): step 1/1. Its pathway is purine metabolism; IMP biosynthesis via de novo pathway; IMP from 5-formamido-1-(5-phospho-D-ribosyl)imidazole-4-carboxamide: step 1/1. This is Bifunctional purine biosynthesis protein PurH from Caldicellulosiruptor saccharolyticus (strain ATCC 43494 / DSM 8903 / Tp8T 6331).